The sequence spans 49 residues: Osteocalcin (49 aa).

One can recognise a Gla domain in the interval 1-47 (YLDHGLGAPAPYPDPLEPKREVCELNPDCDELADHIGFQEAYRRFYG). P9 is subject to Hydroxyproline. Residues E17, E21, E24, and D30 each coordinate Ca(2+). A 4-carboxyglutamate mark is found at E17, E21, and E24. A disulfide bridge connects residues C23 and C29.

It belongs to the osteocalcin/matrix Gla protein family. Post-translationally, gamma-carboxyglutamic acid residues are formed by vitamin K dependent carboxylation. These residues are essential for the binding of calcium.

The protein resides in the secreted. The carboxylated form is one of the main organic components of the bone matrix, which constitutes 1-2% of the total bone protein: it acts as a negative regulator of bone formation and is required to limit bone formation without impairing bone resorption or mineralization. The carboxylated form binds strongly to apatite and calcium. In terms of biological role, the uncarboxylated form acts as a hormone secreted by osteoblasts, which regulates different cellular processes, such as energy metabolism, male fertility and brain development. Regulates of energy metabolism by acting as a hormone favoring pancreatic beta-cell proliferation, insulin secretion and sensitivity and energy expenditure. Uncarboxylated osteocalcin hormone also promotes testosterone production in the testes: acts as a ligand for G protein-coupled receptor GPRC6A at the surface of Leydig cells, initiating a signaling response that promotes the expression of enzymes required for testosterone synthesis in a CREB-dependent manner. Also acts as a regulator of brain development: osteocalcin hormone crosses the blood-brain barrier and acts as a ligand for GPR158 on neurons, initiating a signaling response that prevents neuronal apoptosis in the hippocampus, favors the synthesis of all monoamine neurotransmitters and inhibits that of gamma-aminobutyric acid (GABA). Osteocalcin also crosses the placenta during pregnancy and maternal osteocalcin is required for fetal brain development. In Bison priscus (Steppe wisent), this protein is Osteocalcin (BGLAP).